A 629-amino-acid polypeptide reads, in one-letter code: Phosphomethylpyrimidine synthase (629 aa).

Polar residues predominate over residues 1-13; sequence MTTKSKNAINLSD. The tract at residues 1–22 is disordered; that stretch reads MTTKSKNAINLSDSAKVDEQSV. Substrate contacts are provided by residues Asn-233, Met-262, Tyr-291, His-327, 347-349, 388-391, and Glu-427; these read SRG and DGLR. Residue His-431 coordinates Zn(2+). Tyr-454 is a binding site for substrate. His-495 provides a ligand contact to Zn(2+). Cys-575, Cys-578, and Cys-583 together coordinate [4Fe-4S] cluster.

Belongs to the ThiC family. As to quaternary structure, homodimer. [4Fe-4S] cluster serves as cofactor.

The catalysed reaction is 5-amino-1-(5-phospho-beta-D-ribosyl)imidazole + S-adenosyl-L-methionine = 4-amino-2-methyl-5-(phosphooxymethyl)pyrimidine + CO + 5'-deoxyadenosine + formate + L-methionine + 3 H(+). Its pathway is cofactor biosynthesis; thiamine diphosphate biosynthesis. Functionally, catalyzes the synthesis of the hydroxymethylpyrimidine phosphate (HMP-P) moiety of thiamine from aminoimidazole ribotide (AIR) in a radical S-adenosyl-L-methionine (SAM)-dependent reaction. The polypeptide is Phosphomethylpyrimidine synthase (Pseudomonas fluorescens (strain Pf0-1)).